Here is a 253-residue protein sequence, read N- to C-terminus: ATP synthase subunit a (253 aa).

6 helical membrane passes run 27–47 (ISFT…IGFF), 87–107 (FFPF…IGMV), 117–137 (IIVT…VGLI), 146–166 (LFAP…IEII), 196–216 (FTVM…LAFA), and 224–244 (LEFL…CVYL).

This sequence belongs to the ATPase A chain family. In terms of assembly, F-type ATPases have 2 components, CF(1) - the catalytic core - and CF(0) - the membrane proton channel. CF(1) has five subunits: alpha(3), beta(3), gamma(1), delta(1), epsilon(1). CF(0) has three main subunits: a(1), b(2) and c(9-12). The alpha and beta chains form an alternating ring which encloses part of the gamma chain. CF(1) is attached to CF(0) by a central stalk formed by the gamma and epsilon chains, while a peripheral stalk is formed by the delta and b chains.

The protein localises to the cell inner membrane. Functionally, key component of the proton channel; it plays a direct role in the translocation of protons across the membrane. The chain is ATP synthase subunit a from Hyphomonas neptunium (strain ATCC 15444).